A 626-amino-acid polypeptide reads, in one-letter code: ATP-dependent RNA helicase dbp-8 (626 aa).

Residues 1-25 (MPSATAAKAKKANANANLKSKVNKA) show a composition bias toward low complexity. A disordered region spans residues 1 to 183 (MPSATAAKAK…ATPALPVPEP (183 aa)). A compositionally biased stretch (acidic residues) spans 40 to 98 (DESDFGSELDVEDESAASDEEDEDEDEDEHDLEEGVSDEGEGVSDEEEGVSDEDEDEEN). Residues 161–173 (KQAEAPKTEKTEE) are compositionally biased toward basic and acidic residues. Residues 195 to 223 (TTFDALNVRPWLVQSLANMAIKRPTGIQK) carry the Q motif motif. In terms of domain architecture, Helicase ATP-binding spans 226–406 (IPEILKGRDC…ERPPIPGRAP (181 aa)). 239–246 (SRTGSGKT) is a binding site for ATP. A DEAD box motif is present at residues 348–351 (DEAD). Residues 438–589 (YLHMFLLTPQ…GVNLETRVIR (152 aa)) enclose the Helicase C-terminal domain.

It belongs to the DEAD box helicase family. DDX49/DBP8 subfamily.

The protein localises to the nucleus. It is found in the nucleolus. It catalyses the reaction ATP + H2O = ADP + phosphate + H(+). Functionally, ATP-binding RNA helicase involved in 40S ribosomal subunit biogenesis and is required for the normal formation of 18S rRNAs through pre-rRNA processing at A0, A1 and A2 sites. Required for vegetative growth. In Neurospora crassa (strain ATCC 24698 / 74-OR23-1A / CBS 708.71 / DSM 1257 / FGSC 987), this protein is ATP-dependent RNA helicase dbp-8 (dbp-8).